Here is a 387-residue protein sequence, read N- to C-terminus: G-protein coupled receptor homolog R33 (387 aa).

The Extracellular segment spans residues 1-33 (MDVLLGTEELEDELHQLHFNYTCVPSLGLSVAR). N-linked (GlcNAc...) asparagine; by host glycosylation occurs at Asn20. The helical transmembrane segment at 34 to 61 (DAETAVNFLIVLVGGPMNFLVLATQMLS) threads the bilayer. Over 62–71 (NRSYSVSTPT) the chain is Cytoplasmic. A helical transmembrane segment spans residues 72 to 94 (LYMTNLYLANLLTVATLPFLMLS). Residues 95–107 (NRGLVGSSPEGCK) lie on the Extracellular side of the membrane. A helical membrane pass occupies residues 108–129 (IAALAYYATCTAGFATLMLIAI). At 130–150 (NRYRVIHQRTRSGAGSKRQTY) the chain is on the cytoplasmic side. A helical membrane pass occupies residues 151 to 169 (AVLAVTWLASLMCASPAPL). The Extracellular portion of the chain corresponds to 170-204 (YATVMAHDSADALAFETCIIYFSYDQVKTVLATFK). A helical membrane pass occupies residues 205–224 (ILITMIWGITPVVMMSWFYV). Over 225 to 244 (FFYRRLKLTSYRRRSQTLTF) the chain is Cytoplasmic. The helical transmembrane segment at 245–268 (VTTLMLSFLVVQTPFVAIMSYDSY) threads the bilayer. Residues 269–285 (GVLNWPINCDTINKRDA) lie on the Extracellular side of the membrane. A helical membrane pass occupies residues 286-309 (VSMLARVVPNFHCLLNPVLYAFLG). The Cytoplasmic segment spans residues 310–387 (RDFNKRFILC…PPPPPPPPNC (78 aa)). Residues 368 to 387 (RLRALGRPPPPPPPPPPPNC) form a disordered region. Pro residues predominate over residues 374–387 (RPPPPPPPPPPPNC).

The protein belongs to the G-protein coupled receptor 1 family.

Its subcellular location is the host cell membrane. Plays an important role in vivo, in particular in the dissemination to or replication in the salivary gland. This chain is G-protein coupled receptor homolog R33, found in Rattus.